The primary structure comprises 68 residues: Potassium channel toxin epsilon-KTx 1.2 (68 aa).

The signal sequence occupies residues Met-1–Ala-26. 4 disulfides stabilise this stretch: Cys-30-Cys-38, Cys-33-Cys-54, Cys-37-Cys-47, and Cys-42-Cys-52. A Tyrosine amide modification is found at Tyr-55. Residues Arg-57 to Gln-68 constitute a propeptide that is removed on maturation.

It belongs to the short scorpion toxin superfamily. Potassium channel inhibitor family. Epsilon-KTx 01 subfamily. In terms of tissue distribution, expressed by the venom gland.

The protein resides in the secreted. In terms of biological role, potassium channel blocker. At 3 uM, this toxin blocks voltage-gated potassium channels rKv1.2/KCNA2 (5%), hKv1.3/KCNA3 (10%),rKv1.4/KCNA4 (20%), Kv11/hERG (24%), and Shaker-IR (27%). This chain is Potassium channel toxin epsilon-KTx 1.2, found in Tityus serrulatus (Brazilian scorpion).